The sequence spans 301 residues: Putative two-component membrane permease complex subunit SMU_747c (301 aa).

8 helical membrane passes run 15 to 35, 60 to 80, 97 to 117, 124 to 144, 188 to 208, 211 to 231, 238 to 258, and 278 to 298; these read LAIF…GAIL, ILFG…IVPI, FLAT…SAFG, FLRL…LGFI, YLIF…TRIL, IGHN…ILSL, FIGT…FLLI, and FILQ…LIVG.

Belongs to the UPF0718 family. In terms of assembly, interacts with SMU_746c.

It is found in the cell membrane. Its function is as follows. Could be part of a two-component membrane permease system responsible for amino acid transport under low pH. Involved in acidogenesis, biofilm formation and low-pH survival. The polypeptide is Putative two-component membrane permease complex subunit SMU_747c (Streptococcus mutans serotype c (strain ATCC 700610 / UA159)).